The chain runs to 280 residues: Large ribosomal subunit protein uL2 (280 aa).

Disordered stretches follow at residues 27-58 and 226-280; these read STPE…GGGH and MNPV…KHGR. Composition is skewed to basic residues over residues 37 to 58 and 268 to 280; these read LHGH…GGGH and IVRR…KHGR.

It belongs to the universal ribosomal protein uL2 family. Part of the 50S ribosomal subunit. Forms a bridge to the 30S subunit in the 70S ribosome.

Functionally, one of the primary rRNA binding proteins. Required for association of the 30S and 50S subunits to form the 70S ribosome, for tRNA binding and peptide bond formation. It has been suggested to have peptidyltransferase activity; this is somewhat controversial. Makes several contacts with the 16S rRNA in the 70S ribosome. The sequence is that of Large ribosomal subunit protein uL2 from Mycobacterium ulcerans (strain Agy99).